Consider the following 328-residue polypeptide: DNA-directed RNA polymerase subunit alpha (328 aa).

Residues 1-230 form an alpha N-terminal domain (alpha-NTD) region; it reads MIQITGRKFK…IILDHFMFIE (230 aa). Residues 257-328 form an alpha C-terminal domain (alpha-CTD) region; that stretch reads PEDVMSKKVE…FGLSLRKGDK (72 aa).

The protein belongs to the RNA polymerase alpha chain family. In terms of assembly, homodimer. The RNAP catalytic core consists of 2 alpha, 1 beta, 1 beta' and 1 omega subunit. When a sigma factor is associated with the core the holoenzyme is formed, which can initiate transcription.

The enzyme catalyses RNA(n) + a ribonucleoside 5'-triphosphate = RNA(n+1) + diphosphate. In terms of biological role, DNA-dependent RNA polymerase catalyzes the transcription of DNA into RNA using the four ribonucleoside triphosphates as substrates. In Fervidobacterium nodosum (strain ATCC 35602 / DSM 5306 / Rt17-B1), this protein is DNA-directed RNA polymerase subunit alpha.